The chain runs to 184 residues: MIQRLQNLYLTKVQTTLTEQFQYKNTHEIPRLEKIVINRGVGSASQNTKLLESLADELTILAGQRPIVKRAKKAIAGFGVREDMPIGLTVTLRGERMYAFYDRLVNLALPRIRDFQGISPKNFDGHGNYTLGLTEQLMFPEVSYEQIDQVCGMDISIVTTASTDREGHGLLKELGMPFKAGSVN.

It belongs to the universal ribosomal protein uL5 family. In terms of assembly, part of the 50S ribosomal subunit; contacts the 5S rRNA.

Its subcellular location is the plastid. It localises to the chloroplast. Functionally, binds 5S rRNA, forms part of the central protuberance of the 50S subunit. The chain is Large ribosomal subunit protein uL5c (rpl5) from Ostreococcus tauri.